Here is a 208-residue protein sequence, read N- to C-terminus: Putative ankyrin repeat protein Ta0196 (208 aa).

4 ANK repeats span residues 49–78 (YQRN…HIDD), 82–111 (EGNT…SIDI), 115–144 (AGNT…NINI), and 148–177 (EGDT…DLNA).

The protein is Putative ankyrin repeat protein Ta0196 of Thermoplasma acidophilum (strain ATCC 25905 / DSM 1728 / JCM 9062 / NBRC 15155 / AMRC-C165).